The following is a 314-amino-acid chain: Aspartate carbamoyltransferase catalytic subunit (314 aa).

Carbamoyl phosphate-binding residues include Arg-64 and Thr-65. Lys-92 lines the L-aspartate pocket. Carbamoyl phosphate-binding residues include Arg-114, His-142, and Gln-145. L-aspartate is bound by residues Arg-175 and Arg-230. Carbamoyl phosphate-binding residues include Gly-271 and Pro-272.

This sequence belongs to the aspartate/ornithine carbamoyltransferase superfamily. ATCase family. Heterododecamer (2C3:3R2) of six catalytic PyrB chains organized as two trimers (C3), and six regulatory PyrI chains organized as three dimers (R2).

The enzyme catalyses carbamoyl phosphate + L-aspartate = N-carbamoyl-L-aspartate + phosphate + H(+). It functions in the pathway pyrimidine metabolism; UMP biosynthesis via de novo pathway; (S)-dihydroorotate from bicarbonate: step 2/3. Its function is as follows. Catalyzes the condensation of carbamoyl phosphate and aspartate to form carbamoyl aspartate and inorganic phosphate, the committed step in the de novo pyrimidine nucleotide biosynthesis pathway. The protein is Aspartate carbamoyltransferase catalytic subunit of Deinococcus radiodurans (strain ATCC 13939 / DSM 20539 / JCM 16871 / CCUG 27074 / LMG 4051 / NBRC 15346 / NCIMB 9279 / VKM B-1422 / R1).